Consider the following 334-residue polypeptide: Fructose-1,6-bisphosphatase class 1 (334 aa).

Residues Glu90, Asp113, Leu115, and Asp116 each coordinate Mg(2+). Substrate contacts are provided by residues 116-119 (DGSS), Asn209, Tyr242, and Lys272. Glu278 serves as a coordination point for Mg(2+).

This sequence belongs to the FBPase class 1 family. In terms of assembly, homotetramer. Mg(2+) serves as cofactor.

It is found in the cytoplasm. The catalysed reaction is beta-D-fructose 1,6-bisphosphate + H2O = beta-D-fructose 6-phosphate + phosphate. It functions in the pathway carbohydrate biosynthesis; gluconeogenesis. The protein is Fructose-1,6-bisphosphatase class 1 of Haemophilus ducreyi (strain 35000HP / ATCC 700724).